The chain runs to 353 residues: Tectonin-2 (353 aa).

Positions 44–93 constitute a Ricin B-type lectin domain; that stretch reads WIFDNDGYIRLAANHNLVLDVNGGAAKEGNTVLSYPDKKDHAKNQLWVNK. 6 repeat units span residues 138 to 173, 174 to 210, 211 to 247, 248 to 282, 283 to 318, and 319 to 353. The tract at residues 138–353 is 6 X approximate tandem repeats; that stretch reads SAWERHEGEL…SAHNIYKALL (216 aa).

The protein belongs to the tectonin family.

It localises to the cell surface. It is found in the cytoplasmic vesicle membrane. Functionally, probably involved in bacterial recognition. May be a lectin that function as part of a transmembrane signaling complex during phagocytosis. The protein is Tectonin-2 (TECB) of Physarum polycephalum (Slime mold).